The sequence spans 175 residues: Peptide deformylase (175 aa).

Cys-98 and His-140 together coordinate Fe cation. Residue Glu-141 is part of the active site. Position 144 (His-144) interacts with Fe cation.

The protein belongs to the polypeptide deformylase family. It depends on Fe(2+) as a cofactor.

It catalyses the reaction N-terminal N-formyl-L-methionyl-[peptide] + H2O = N-terminal L-methionyl-[peptide] + formate. In terms of biological role, removes the formyl group from the N-terminal Met of newly synthesized proteins. Requires at least a dipeptide for an efficient rate of reaction. N-terminal L-methionine is a prerequisite for activity but the enzyme has broad specificity at other positions. This chain is Peptide deformylase, found in Bradyrhizobium sp. (strain ORS 278).